Consider the following 1195-residue polypeptide: Cullin-associated NEDD8-dissociated protein 1 (1195 aa).

HEAT repeat units lie at residues 1-37 (MHDI…DESA), 45-83 (NQSL…YLSN), 168-206 (NPVT…KVAL), 397-434 (ELLS…TSPR), 436-474 (STNV…FDNT), 703-742 (ETHR…QIPD), 846-885 (QKHI…ACNE), and 999-1037 (PILD…EGLE).

It belongs to the CAND family.

Functionally, key assembly factor of SCF (SKP1-CUL1-F-box protein) E3 ubiquitin ligase complexes that promotes the exchange of the substrate-recognition F-box subunit in SCF complexes, thereby playing a key role in the cellular repertoire of SCF complexes. Acts as a F-box protein exchange factor. The sequence is that of Cullin-associated NEDD8-dissociated protein 1 (TIP120) from Candida albicans (strain SC5314 / ATCC MYA-2876) (Yeast).